A 469-amino-acid polypeptide reads, in one-letter code: Argininosuccinate lyase (469 aa).

Belongs to the lyase 1 family. Argininosuccinate lyase subfamily.

Its subcellular location is the cytoplasm. The enzyme catalyses 2-(N(omega)-L-arginino)succinate = fumarate + L-arginine. It participates in amino-acid biosynthesis; L-arginine biosynthesis; L-arginine from L-ornithine and carbamoyl phosphate: step 3/3. This is Argininosuccinate lyase from Burkholderia lata (strain ATCC 17760 / DSM 23089 / LMG 22485 / NCIMB 9086 / R18194 / 383).